The sequence spans 574 residues: Glutamyl-tRNA(Gln) amidotransferase subunit B, mitochondrial (574 aa).

Belongs to the GatB/GatE family. GatB subfamily. As to quaternary structure, subunit of the heterotrimeric GatCAB amidotransferase (AdT) complex, composed of A, B and C subunits.

The protein resides in the mitochondrion. The enzyme catalyses L-glutamyl-tRNA(Gln) + L-glutamine + ATP + H2O = L-glutaminyl-tRNA(Gln) + L-glutamate + ADP + phosphate + H(+). In terms of biological role, allows the formation of correctly charged Gln-tRNA(Gln) through the transamidation of misacylated Glu-tRNA(Gln) in the mitochondria. The reaction takes place in the presence of glutamine and ATP through an activated gamma-phospho-Glu-tRNA(Gln). This is Glutamyl-tRNA(Gln) amidotransferase subunit B, mitochondrial from Phytophthora infestans (strain T30-4) (Potato late blight agent).